A 66-amino-acid polypeptide reads, in one-letter code: Metallothionein (66 aa).

At S1 the chain carries N-acetylserine. Cd(2+) contacts are provided by C9, C13, C18, C20, C24, C26, C30, C32, C35, C38, C40, C45, C47, C51, C57, C59, C63, and C65.

It belongs to the metallothionein superfamily. Type 2 family.

In terms of biological role, the metallothioneins are involved in the cellular sequestration of toxic metal ions and regulation of essential trace elements. The sequence is that of Metallothionein from Arianta arbustorum (Land snail).